A 133-amino-acid chain; its full sequence is NADH dehydrogenase [ubiquinone] 1 alpha subcomplex subunit 6 (133 aa).

The protein belongs to the complex I LYR family. Complex I is composed of at least 49 different subunits.

The protein localises to the mitochondrion inner membrane. Accessory subunit of the mitochondrial membrane respiratory chain NADH dehydrogenase (Complex I), that is believed to be not involved in catalysis. Complex I functions in the transfer of electrons from NADH to the respiratory chain. The immediate electron acceptor for the enzyme is believed to be ubiquinone. The chain is NADH dehydrogenase [ubiquinone] 1 alpha subcomplex subunit 6 from Arabidopsis thaliana (Mouse-ear cress).